A 1080-amino-acid polypeptide reads, in one-letter code: Carbamoyl phosphate synthase large chain (1080 aa).

The segment at 1 to 403 (MPKRTDLRTI…SLQKAVRGLE (403 aa)) is carboxyphosphate synthetic domain. The ATP site is built by Arg129, Arg169, Gly175, Gly176, Glu208, Val210, Glu215, Gly241, Val242, His243, Gln285, and Glu299. An ATP-grasp 1 domain is found at 133 to 328 (RVAMQEIGLE…IAKIAAKLAV (196 aa)). 3 residues coordinate Mg(2+): Gln285, Glu299, and Asn301. Positions 285, 299, and 301 each coordinate Mn(2+). The interval 404-554 (TGKVGLEPTG…YSTYEEECEA (151 aa)) is oligomerization domain. The interval 555–942 (APSDRRKIMI…AFARAQEAGD (388 aa)) is carbamoyl phosphate synthetic domain. The ATP-grasp 2 domain maps to 679–876 (QRLVQQLGLR…LAKIAARCMT (198 aa)). Residues Arg715, Arg754, Leu756, Glu761, Gly787, Val788, His789, Ser790, Gln830, and Glu847 each coordinate ATP. Mg(2+) is bound by residues Gln830, Glu847, and Asn849. Residues Gln830, Glu847, and Asn849 each contribute to the Mn(2+) site. Residues 943-1080 (IRAPQPGRAF…LQELHKELQV (138 aa)) enclose the MGS-like domain. Residues 943–1080 (IRAPQPGRAF…LQELHKELQV (138 aa)) form an allosteric domain region.

Belongs to the CarB family. As to quaternary structure, composed of two chains; the small (or glutamine) chain promotes the hydrolysis of glutamine to ammonia, which is used by the large (or ammonia) chain to synthesize carbamoyl phosphate. Tetramer of heterodimers (alpha,beta)4. The cofactor is Mg(2+). It depends on Mn(2+) as a cofactor.

It carries out the reaction hydrogencarbonate + L-glutamine + 2 ATP + H2O = carbamoyl phosphate + L-glutamate + 2 ADP + phosphate + 2 H(+). The catalysed reaction is hydrogencarbonate + NH4(+) + 2 ATP = carbamoyl phosphate + 2 ADP + phosphate + 2 H(+). The protein operates within amino-acid biosynthesis; L-arginine biosynthesis; carbamoyl phosphate from bicarbonate: step 1/1. Its pathway is pyrimidine metabolism; UMP biosynthesis via de novo pathway; (S)-dihydroorotate from bicarbonate: step 1/3. In terms of biological role, large subunit of the glutamine-dependent carbamoyl phosphate synthetase (CPSase). CPSase catalyzes the formation of carbamoyl phosphate from the ammonia moiety of glutamine, carbonate, and phosphate donated by ATP, constituting the first step of 2 biosynthetic pathways, one leading to arginine and/or urea and the other to pyrimidine nucleotides. The large subunit (synthetase) binds the substrates ammonia (free or transferred from glutamine from the small subunit), hydrogencarbonate and ATP and carries out an ATP-coupled ligase reaction, activating hydrogencarbonate by forming carboxy phosphate which reacts with ammonia to form carbamoyl phosphate. The sequence is that of Carbamoyl phosphate synthase large chain from Xylella fastidiosa (strain Temecula1 / ATCC 700964).